A 175-amino-acid polypeptide reads, in one-letter code: Ribosome maturation factor RimM (175 aa).

One can recognise a PRC barrel domain in the interval 96–175; that stretch reads EGDYYWHDLI…TITVDWDAGF (80 aa).

It belongs to the RimM family. As to quaternary structure, binds ribosomal protein uS19.

The protein localises to the cytoplasm. An accessory protein needed during the final step in the assembly of 30S ribosomal subunit, possibly for assembly of the head region. Essential for efficient processing of 16S rRNA. May be needed both before and after RbfA during the maturation of 16S rRNA. It has affinity for free ribosomal 30S subunits but not for 70S ribosomes. In Actinobacillus pleuropneumoniae serotype 5b (strain L20), this protein is Ribosome maturation factor RimM.